The sequence spans 28 residues: Kappa-buthitoxin-Tt2b (28 aa).

Intrachain disulfides connect Cys2–Cys24, Cys7–Cys20, and Cys11–Cys26.

In terms of tissue distribution, expressed by the venom gland.

The protein localises to the secreted. Functionally, blocks potassium channels Shaker-IR (with inactivation domain removed) and hKv1.2/KCNA2. This is Kappa-buthitoxin-Tt2b from Tityus trivittatus (Argentinean scorpion).